A 186-amino-acid polypeptide reads, in one-letter code: MLALFNKLLDWFRALFWKEEMELTLVGLQYSGKTTFVNVIASGQFNEDMIPTVGFNMRKITKGNVTIKLWDIGGQPRFRSMWERYCRGVSAIVYMVDAADQEKIEASKNELHNLLDKPQLQGIPVLVLGNKRDLPGALDEKELIEKMNLSAIQDREICCYSISCKEKDNIDITLQWLIQHSKSRRS.

Residues 1-19 (MLALFNKLLDWFRALFWKE) constitute an intramembrane region (note=Mediates targeting to membranes). GTP contacts are provided by residues 29 to 35 (QYSGKTT), 71 to 75 (DIGGQ), and 130 to 133 (NKRD).

Belongs to the small GTPase superfamily. Arf family.

The protein localises to the late endosome membrane. Its subcellular location is the lysosome membrane. It is found in the cytoplasm. It localises to the cytoskeleton. The protein resides in the spindle. The protein localises to the cell projection. Its subcellular location is the axon. It is found in the synapse. In terms of biological role, plays a role in lysosome motility. In neurons, mediates the anterograde axonal long-range transport of presynaptic lysosome-related vesicles required for presynaptic biogenesis and synaptic function. May play a role in chromosome segregation. The protein is ADP-ribosylation factor-like protein 8A (ARL8A) of Gallus gallus (Chicken).